Here is a 310-residue protein sequence, read N- to C-terminus: Hairy/enhancer-of-split related with YRPW motif-like protein (310 aa).

The interval 1–21 is disordered; that stretch reads MKRPHDYSSPDSDTDELIDVG. The segment covering 12–21 has biased composition (acidic residues); it reads SDTDELIDVG. The 56-residue stretch at 43 to 98 folds into the bHLH domain; it reads ARKKRRGIIEKRRRDRINHSLSELRRLVPSAFEKQGSSKLEKAEILQMTVDHLKLL. The Orange domain maps to 116–152; the sequence is YRTLGFRECVGEVVRYLSSLEGVESSDPIGARLVSHL. 2 stretches are compositionally biased toward low complexity: residues 182 to 192 and 261 to 273; these read LQAASPPASST and PSSS…SSPP. 2 disordered regions span residues 182–208 and 248–310; these read LQAA…HGTA and HRLQ…IGAF. Polar residues predominate over residues 293 to 302; sequence LSSSSKSAQA.

The protein belongs to the HEY family.

It is found in the nucleus. In terms of biological role, transcriptional repressor which functions as a downstream effector of Notch signaling. In Danio rerio (Zebrafish), this protein is Hairy/enhancer-of-split related with YRPW motif-like protein (heyl).